Consider the following 462-residue polypeptide: uncharacterized protein (462 aa).

The next 2 helical transmembrane spans lie at 12–32 and 257–277; these read WWWL…APTV and GLCV…LELV.

This sequence belongs to the HHV-5 US29 protein family.

The protein localises to the host membrane. This is an uncharacterized protein from Homo sapiens (Human).